We begin with the raw amino-acid sequence, 251 residues long: Probable ATP-dependent transporter ycf16 (251 aa).

Residues 6–250 (LEIKDLYASV…EKHGYDWITQ (245 aa)) form the ABC transporter domain. 38–45 (GPNGSGKS) contributes to the ATP binding site.

This sequence belongs to the ABC transporter superfamily. Ycf16 family.

It is found in the plastid. The protein resides in the chloroplast. The chain is Probable ATP-dependent transporter ycf16 (ycf16) from Pyropia yezoensis (Susabi-nori).